We begin with the raw amino-acid sequence, 218 residues long: Phosphoglycolate phosphatase (218 aa).

Aspartate 7 functions as the Nucleophile in the catalytic mechanism. Aspartate 7, aspartate 9, and aspartate 167 together coordinate Mg(2+).

It belongs to the HAD-like hydrolase superfamily. CbbY/CbbZ/Gph/YieH family. The cofactor is Mg(2+).

The enzyme catalyses 2-phosphoglycolate + H2O = glycolate + phosphate. It functions in the pathway organic acid metabolism; glycolate biosynthesis; glycolate from 2-phosphoglycolate: step 1/1. Functionally, specifically catalyzes the dephosphorylation of 2-phosphoglycolate. Is involved in the dissimilation of the intracellular 2-phosphoglycolate formed during the DNA repair of 3'-phosphoglycolate ends, a major class of DNA lesions induced by oxidative stress. This is Phosphoglycolate phosphatase from Cereibacter sphaeroides (strain ATCC 17029 / ATH 2.4.9) (Rhodobacter sphaeroides).